The following is a 1363-amino-acid chain: Vascular endothelial growth factor receptor 3 (1363 aa).

Positions 1-24 (MQPGAALNLRLWLCLGLLQGLANG) are cleaved as a signal peptide. The Extracellular portion of the chain corresponds to 25 to 775 (YSMTPPTLNI…EGSEDKGSME (751 aa)). N-linked (GlcNAc...) asparagine glycans are attached at residues Asn33, Asn104, Asn166, Asn251, Asn299, and Asn411. Ig-like C2-type domains are found at residues 44 to 118 (GDSL…YIKA), 151 to 213 (KDSM…WGDQ), 230 to 326 (YDIQ…TEVI), 331 to 415 (PFIS…ISLE), 422 to 552 (PHIH…FYVT), 555 to 671 (PDGF…KYLS), and 678 to 764 (PRLT…ASVA). 2 cysteine pairs are disulfide-bonded: Cys51–Cys111 and Cys158–Cys206. A disulfide bridge links Cys252 with Cys310. 3 disulfide bridges follow: Cys445/Cys534, Cys466/Cys486, and Cys578/Cys653. N-linked (GlcNAc...) asparagine glycans are attached at residues Asn515, Asn527, Asn582, Asn594, Asn683, and Asn690. Cys699 and Cys751 are disulfide-bonded. Asn758 carries N-linked (GlcNAc...) asparagine glycosylation. The chain crosses the membrane as a helical span at residues 776 to 796 (IVILIGTGVIAVFFWVLLLLI). Topologically, residues 797–1363 (FCNMKRPAHA…GSTFFADSSY (567 aa)) are cytoplasmic. Phosphotyrosine; by SRC is present on residues Tyr830 and Tyr833. Residues 845-1173 (LHLGRVLGHG…DLVEILGDLL (329 aa)) form the Protein kinase domain. ATP is bound by residues 851–859 (LGHGAFGKV) and Lys879. Asp1037 serves as the catalytic Proton acceptor. Residue Tyr1063 is modified to Phosphotyrosine; by autocatalysis and SRC. Tyr1068, Tyr1230, Tyr1231, and Tyr1265 each carry phosphotyrosine; by autocatalysis. A disordered region spans residues 1288–1330 (ESRHRPEGSFSCKGPGQHMDIPRGHPDPQGRRRRPTQGAQGGK). Residues 1307 to 1317 (DIPRGHPDPQG) are compositionally biased toward basic and acidic residues. A phosphotyrosine; by autocatalysis and SRC mark is found at Tyr1333 and Tyr1337. Tyr1363 is subject to Phosphotyrosine; by autocatalysis.

Belongs to the protein kinase superfamily. Tyr protein kinase family. CSF-1/PDGF receptor subfamily. In terms of assembly, interacts with VEGFC and VEGFD. Monomer in the absence of bound VEGFC or VEGFD. Homodimer in the presence of bound VEGFC or VEGFD. Can also form a heterodimer with KDR. Interacts with PTPN14; the interaction is enhanced by stimulation with VEGFC. Interacts with CRK, GRB2, PTK2/FAK1, SHC1, PIK3R1 and PTPN11/SHP-2. Identified in a complex with SRC and ITGB1. Post-translationally, autophosphorylated on tyrosine residues upon ligand binding. Autophosphorylation occurs in trans, i.e. one subunit of the dimeric receptor phosphorylates tyrosine residues on the other subunit. Phosphorylation in response to H(2)O(2) is mediated by a process that requires SRC and PRKCD activity. Phosphorylation at Tyr-1068 is required for autophosphorylation at additional tyrosine residues. Phosphorylation at Tyr-1063 and Tyr-1337 is important for interaction with CRK and subsequent activation of MAPK8. Phosphorylation at Tyr-1230, Tyr-1231 and Tyr-1337 is important for interaction with GRB2 and subsequent activation of the AKT1 and MAPK1/ERK2 and/or MAPK3/ERK1 signaling pathways. In response to endothelial cell adhesion onto collagen, can also be phosphorylated in the absence of FLT4 kinase activity by SRC. Expressed in adult lung and liver, and in fetal liver, brain, intestine and placenta.

It is found in the cell membrane. The protein localises to the cytoplasm. The protein resides in the nucleus. The enzyme catalyses L-tyrosyl-[protein] + ATP = O-phospho-L-tyrosyl-[protein] + ADP + H(+). Present in an inactive conformation in the absence of bound ligand. Binding of VEGFC or VEGFD leads to dimerization and activation by autophosphorylation on tyrosine residues. Functionally, tyrosine-protein kinase that acts as a cell-surface receptor for VEGFC and VEGFD, and plays an essential role in adult lymphangiogenesis and in the development of the vascular network and the cardiovascular system during embryonic development. Promotes proliferation, survival and migration of endothelial cells, and regulates angiogenic sprouting. Signaling by activated FLT4 leads to enhanced production of VEGFC, and to a lesser degree VEGFA, thereby creating a positive feedback loop that enhances FLT4 signaling. Modulates KDR signaling by forming heterodimers. Mediates activation of the MAPK1/ERK2, MAPK3/ERK1 signaling pathway, of MAPK8 and the JUN signaling pathway, and of the AKT1 signaling pathway. Phosphorylates SHC1. Mediates phosphorylation of PIK3R1, the regulatory subunit of phosphatidylinositol 3-kinase. Promotes phosphorylation of MAPK8 at 'Thr-183' and 'Tyr-185', and of AKT1 at 'Ser-473'. In Mus musculus (Mouse), this protein is Vascular endothelial growth factor receptor 3 (Flt4).